Here is a 554-residue protein sequence, read N- to C-terminus: Formate--tetrahydrofolate ligase (554 aa).

63–70 is a binding site for ATP; it reads TPAGEGKT.

The protein belongs to the formate--tetrahydrofolate ligase family.

It carries out the reaction (6S)-5,6,7,8-tetrahydrofolate + formate + ATP = (6R)-10-formyltetrahydrofolate + ADP + phosphate. It functions in the pathway one-carbon metabolism; tetrahydrofolate interconversion. The sequence is that of Formate--tetrahydrofolate ligase from Halothermothrix orenii (strain H 168 / OCM 544 / DSM 9562).